The primary structure comprises 132 residues: DNA-binding protein inhibitor ID-2 (132 aa).

The bHLH domain maps to 23–75 (ARSKTPVDDPMSLLYNMNDCYSKLKELVPSIPQNKKVSKMEILQHVIDYILDL). The Nuclear export signal signature appears at 105–114 (LNTDISILSL).

In terms of assembly, heterodimer with other HLH proteins.

It is found in the cytoplasm. The protein resides in the nucleus. Its function is as follows. Transcriptional regulator (lacking a basic DNA binding domain) which negatively regulates the basic helix-loop-helix (bHLH) transcription factors by forming heterodimers and inhibiting their DNA binding and transcriptional activity. Inhibits the activity of both neurogenic (neurod1/neuroD) and myogenic (myod1/myoD) bHLH factors. May play a role in the regulation of the circadian clock. This chain is DNA-binding protein inhibitor ID-2, found in Xenopus tropicalis (Western clawed frog).